Reading from the N-terminus, the 93-residue chain is uncharacterized protein (93 aa).

A helical transmembrane segment spans residues 20–40; the sequence is VYIYLCFSLMTIALICYLIHI. Residue Asn78 is glycosylated (N-linked (GlcNAc...) asparagine; by host).

This sequence belongs to the asfivirus KP93L family.

The protein resides in the host membrane. This is an uncharacterized protein from Ornithodoros (relapsing fever ticks).